We begin with the raw amino-acid sequence, 300 residues long: Nucleotide-binding protein TM1040_2438 (300 aa).

Residue 24–31 coordinates ATP; it reads GPSGAGRT. Residue 71-74 participates in GTP binding; sequence DPRN.

It belongs to the RapZ-like family.

Displays ATPase and GTPase activities. The chain is Nucleotide-binding protein TM1040_2438 from Ruegeria sp. (strain TM1040) (Silicibacter sp.).